A 362-amino-acid polypeptide reads, in one-letter code: Phosphoserine aminotransferase (362 aa).

Residues Ser9 and Arg42 each contribute to the L-glutamate site. Residues 76–77, Trp102, Thr153, Asp174, and Gln197 each bind pyridoxal 5'-phosphate; that span reads GR. At Lys198 the chain carries N6-(pyridoxal phosphate)lysine. 239–240 provides a ligand contact to pyridoxal 5'-phosphate; the sequence is NT.

Belongs to the class-V pyridoxal-phosphate-dependent aminotransferase family. SerC subfamily. As to quaternary structure, homodimer. It depends on pyridoxal 5'-phosphate as a cofactor.

It is found in the cytoplasm. The catalysed reaction is O-phospho-L-serine + 2-oxoglutarate = 3-phosphooxypyruvate + L-glutamate. It carries out the reaction 4-(phosphooxy)-L-threonine + 2-oxoglutarate = (R)-3-hydroxy-2-oxo-4-phosphooxybutanoate + L-glutamate. Its pathway is amino-acid biosynthesis; L-serine biosynthesis; L-serine from 3-phospho-D-glycerate: step 2/3. It participates in cofactor biosynthesis; pyridoxine 5'-phosphate biosynthesis; pyridoxine 5'-phosphate from D-erythrose 4-phosphate: step 3/5. Catalyzes the reversible conversion of 3-phosphohydroxypyruvate to phosphoserine and of 3-hydroxy-2-oxo-4-phosphonooxybutanoate to phosphohydroxythreonine. This chain is Phosphoserine aminotransferase, found in Escherichia coli (strain ATCC 8739 / DSM 1576 / NBRC 3972 / NCIMB 8545 / WDCM 00012 / Crooks).